The sequence spans 121 residues: Protransforming growth factor alpha (121 aa).

Residue leucine 1 is a signal peptide. A propeptide spans 2–16 (ENSTSLLSDPPVAAA) (removed in mature form). At 2 to 75 (ENSTSLLSDP…AVVAASQKKQ (74 aa)) the chain is on the extracellular side. Asparagine 3 is a glycosylation site (N-linked (GlcNAc...) asparagine). The EGF-like domain occupies 20 to 60 (HFNDCPDSHTQFCFHGTCRFLVQEDRPACVCHSGYVGARCE). Cystine bridges form between cysteine 24/cysteine 37, cysteine 32/cysteine 48, and cysteine 50/cysteine 59. Residues 67 to 121 (VVAASQKKQAITALVVVSIVALAVLIITCVLIHCCQVRKHCEWCRALICRHEKPS) constitute a propeptide, removed in mature form. A helical transmembrane segment spans residues 76 to 101 (AITALVVVSIVALAVLIITCVLIHCC).

As to quaternary structure, interacts with the PDZ domains of MAGI3, SDCBP and SNTA1. The interaction with SDCBP, is required for the targeting to the cell surface. In the endoplasmic reticulum, in its immature form (i.e. with a prosegment and lacking full N-glycosylation), interacts with CNIH. In the Golgi apparatus, may form a complex with CNIH and GORASP2. Interacts (via cytoplasmic C-terminal domain) with NKD2. As to expression, hypothalamus.

The protein resides in the secreted. The protein localises to the extracellular space. It localises to the cell membrane. Its function is as follows. TGF alpha is a mitogenic polypeptide that is able to bind to the EGF receptor/EGFR and to act synergistically with TGF beta to promote anchorage-independent cell proliferation in soft agar. This is Protransforming growth factor alpha (TGFA) from Macaca mulatta (Rhesus macaque).